The sequence spans 153 residues: UPF0743 protein YCR087C-A (153 aa).

C2HC LYAR-type zinc fingers lie at residues 1–26 (MVTF…YRCP) and 27–52 (NAYY…TSCI). Positions 6, 9, 21, 25, 32, 35, 48, and 51 each coordinate Zn(2+). The disordered stretch occupies residues 63–96 (YKGNKKQKQKQQQKQQQKQHQHQPVATPAKKVEK). The span at 65-83 (GNKKQKQKQQQKQQQKQHQ) shows a compositional bias: basic residues.

It belongs to the UPF0743 family.

The protein localises to the nucleus. Its subcellular location is the nucleolus. This chain is UPF0743 protein YCR087C-A, found in Saccharomyces cerevisiae (strain ATCC 204508 / S288c) (Baker's yeast).